A 491-amino-acid chain; its full sequence is Probable glycogen synthase 2 (491 aa).

Position 15 (K15) interacts with ADP-alpha-D-glucose.

It belongs to the glycosyltransferase 1 family. Bacterial/plant glycogen synthase subfamily.

The enzyme catalyses [(1-&gt;4)-alpha-D-glucosyl](n) + ADP-alpha-D-glucose = [(1-&gt;4)-alpha-D-glucosyl](n+1) + ADP + H(+). Its pathway is glycan biosynthesis; glycogen biosynthesis. Its function is as follows. Synthesizes alpha-1,4-glucan chains using ADP-glucose. This chain is Probable glycogen synthase 2 (glgA2), found in Synechocystis sp. (strain ATCC 27184 / PCC 6803 / Kazusa).